Consider the following 358-residue polypeptide: Programmed cell death protein 2-like (358 aa).

A2 is modified (N-acetylalanine). Residue S20 is modified to Phosphoserine. A Phosphothreonine modification is found at T22.

As to expression, higher expression in lung, colon, mammary gland, cervix, stomach and small intestine.

Its function is as follows. Over-expression suppresses AP1, CREB, NFAT, and NF-kB transcriptional activation, and delays cell cycle progression at S phase. This chain is Programmed cell death protein 2-like (PDCD2L), found in Homo sapiens (Human).